Consider the following 367-residue polypeptide: DNA replication and repair protein RecF (367 aa).

An ATP-binding site is contributed by 30 to 37 (GDNAQGKT).

The protein belongs to the RecF family.

The protein resides in the cytoplasm. The RecF protein is involved in DNA metabolism; it is required for DNA replication and normal SOS inducibility. RecF binds preferentially to single-stranded, linear DNA. It also seems to bind ATP. The polypeptide is DNA replication and repair protein RecF (Clostridium beijerinckii (strain ATCC 51743 / NCIMB 8052) (Clostridium acetobutylicum)).